Reading from the N-terminus, the 75-residue chain is SPbeta prophage-derived uncharacterized protein YomT (75 aa).

The protein is SPbeta prophage-derived uncharacterized protein YomT (yomT) of Bacillus subtilis (strain 168).